The primary structure comprises 224 residues: UPF0758 protein PSPA7_6095 (224 aa).

One can recognise an MPN domain in the interval 102-224; it reads VLESPQAVRD…PLSLAEYGWM (123 aa). 3 residues coordinate Zn(2+): histidine 173, histidine 175, and aspartate 186. Positions 173 to 186 match the JAMM motif motif; the sequence is HNHPSGDARPSLAD.

Belongs to the UPF0758 family.

The chain is UPF0758 protein PSPA7_6095 from Pseudomonas paraeruginosa (strain DSM 24068 / PA7) (Pseudomonas aeruginosa (strain PA7)).